We begin with the raw amino-acid sequence, 25 residues long: Caerin-2.3 (25 aa).

Expressed by the skin parotoid and/or rostral glands.

The protein resides in the secreted. Acts as a male sex pheromone that attracts females. Has no antimicrobial activity. In Ranoidea caerulea (Green tree frog), this protein is Caerin-2.3.